A 142-amino-acid chain; its full sequence is Hemoglobin subunit alpha-I/II (142 aa).

Positions 2–142 (VLSAADKGNV…VSTVLTSKYR (141 aa)) constitute a Globin domain. Ser4 bears the Phosphoserine mark. An N6-succinyllysine mark is found at Lys8 and Lys12. Lys17 bears the N6-acetyllysine; alternate mark. Position 17 is an N6-succinyllysine; alternate (Lys17). Tyr25 is modified (phosphotyrosine). A Phosphoserine modification is found at Ser36. Lys41 carries the post-translational modification N6-succinyllysine. A Phosphoserine modification is found at Ser50. Position 59 (His59) interacts with O2. Residue His88 participates in heme b binding. Ser103 carries the post-translational modification Phosphoserine. A Phosphothreonine modification is found at Thr109. Ser125 bears the Phosphoserine mark. Residues Thr135 and Thr138 each carry the phosphothreonine modification. A Phosphoserine modification is found at Ser139.

This sequence belongs to the globin family. In terms of assembly, heterotetramer of two alpha chains and two beta chains. In terms of tissue distribution, red blood cells.

Functionally, involved in oxygen transport from the lung to the various peripheral tissues. The polypeptide is Hemoglobin subunit alpha-I/II (Bison bonasus (European bison)).